Consider the following 148-residue polypeptide: Cytochrome c oxidase subunit 4, mitochondrial (148 aa).

A mitochondrion-targeting transit peptide spans 1–24 (MFALRSIRSATKAFQTTSIVSQRG).

Slime mold cytochrome c oxidase consists of at least seven different polypeptides species, subunits I, II, III, IV, V, VI, and VIIe/s in order of MW.

The protein resides in the mitochondrion inner membrane. It catalyses the reaction 4 Fe(II)-[cytochrome c] + O2 + 8 H(+)(in) = 4 Fe(III)-[cytochrome c] + 2 H2O + 4 H(+)(out). Its function is as follows. This protein is one of the nuclear-coded polypeptide chains of cytochrome c oxidase, the terminal oxidase in mitochondrial electron transport. In Dictyostelium discoideum (Social amoeba), this protein is Cytochrome c oxidase subunit 4, mitochondrial (cxdA).